Here is a 115-residue protein sequence, read N- to C-terminus: Large ribosomal subunit protein P2 (115 aa).

The residue at position 1 (methionine 1) is an N-acetylmethionine. A Phosphoserine modification is found at serine 19. Lysine 21 is subject to N6-acetyllysine; alternate. Lysine 21 carries the post-translational modification N6-succinyllysine; alternate. The span at 76-90 (APGSAAPAAGSAPAA) shows a compositional bias: low complexity. Positions 76–115 (APGSAAPAAGSAPAAAEEKKDEKKEESEESDDDMGFGLFD) are disordered. Serine 79 and serine 86 each carry phosphoserine. Positions 91 to 101 (AEEKKDEKKEE) are enriched in basic and acidic residues. Phosphoserine occurs at positions 102 and 105.

Belongs to the eukaryotic ribosomal protein P1/P2 family. In terms of assembly, heterodimer with RPLP1 at the lateral ribosomal stalk of the large ribosomal subunit.

Functionally, plays an important role in the elongation step of protein synthesis. The polypeptide is Large ribosomal subunit protein P2 (Rplp2) (Rattus norvegicus (Rat)).